A 273-amino-acid polypeptide reads, in one-letter code: Dermonecrotic toxin SdSicTox-betaIIB1bxi (273 aa).

His-4 is an active-site residue. Glu-24 and Asp-26 together coordinate Mg(2+). The Nucleophile role is filled by His-40. 2 cysteine pairs are disulfide-bonded: Cys-44–Cys-50 and Cys-46–Cys-189. Asp-84 contacts Mg(2+).

It belongs to the arthropod phospholipase D family. Class II subfamily. Requires Mg(2+) as cofactor. In terms of tissue distribution, expressed by the venom gland.

Its subcellular location is the secreted. It catalyses the reaction an N-(acyl)-sphingosylphosphocholine = an N-(acyl)-sphingosyl-1,3-cyclic phosphate + choline. The enzyme catalyses an N-(acyl)-sphingosylphosphoethanolamine = an N-(acyl)-sphingosyl-1,3-cyclic phosphate + ethanolamine. The catalysed reaction is a 1-acyl-sn-glycero-3-phosphocholine = a 1-acyl-sn-glycero-2,3-cyclic phosphate + choline. It carries out the reaction a 1-acyl-sn-glycero-3-phosphoethanolamine = a 1-acyl-sn-glycero-2,3-cyclic phosphate + ethanolamine. Dermonecrotic toxins cleave the phosphodiester linkage between the phosphate and headgroup of certain phospholipids (sphingolipid and lysolipid substrates), forming an alcohol (often choline) and a cyclic phosphate. This toxin acts on sphingomyelin (SM). It may also act on ceramide phosphoethanolamine (CPE), lysophosphatidylcholine (LPC) and lysophosphatidylethanolamine (LPE), but not on lysophosphatidylserine (LPS), and lysophosphatidylglycerol (LPG). It acts by transphosphatidylation, releasing exclusively cyclic phosphate products as second products. Induces dermonecrosis, hemolysis, increased vascular permeability, edema, inflammatory response, and platelet aggregation. The chain is Dermonecrotic toxin SdSicTox-betaIIB1bxi from Sicarius cf. damarensis (strain GJB-2008) (Six-eyed sand spider).